A 217-amino-acid polypeptide reads, in one-letter code: Zinc finger CCHC-type and RNA-binding motif-containing protein 1 (217 aa).

Residues 10–88 enclose the RRM domain; that stretch reads STVYVSNLPF…RVIKASIAID (79 aa). Residues 105-122 form a CCHC-type zinc finger; it reads SKCYECGESGHLSYACPK. Residues 120 to 217 form a disordered region; the sequence is CPKNMLGERE…YFSDEEELSD (98 aa). Residues 145–163 show a composition bias toward acidic residues; it reads PEEEIEEVEVSEEEGEDPA. 3 positions are modified to phosphoserine: Ser155, Ser210, and Ser216.

As to quaternary structure, component of the U11/U12 snRNPs that are part of the U12-type spliceosome. Interacts with ZRSR1. In terms of tissue distribution, expressed at higher level in heart and testis, and at lower level in cerebellum. Weakly expressed at low level in liver.

The protein localises to the nucleus. The protein resides in the nucleoplasm. This chain is Zinc finger CCHC-type and RNA-binding motif-containing protein 1 (Zcrb1), found in Mus musculus (Mouse).